Here is a 215-residue protein sequence, read N- to C-terminus: Cytochrome c biogenesis ATP-binding export protein CcmA (215 aa).

In terms of domain architecture, ABC transporter spans 3-215 (LEAENLAGER…MAAFSVEDIA (213 aa)). 35-42 (GPNGSGKS) serves as a coordination point for ATP.

Belongs to the ABC transporter superfamily. CcmA exporter (TC 3.A.1.107) family. In terms of assembly, the complex is composed of two ATP-binding proteins (CcmA) and two transmembrane proteins (CcmB).

It is found in the cell inner membrane. It carries out the reaction heme b(in) + ATP + H2O = heme b(out) + ADP + phosphate + H(+). Functionally, part of the ABC transporter complex CcmAB involved in the biogenesis of c-type cytochromes; once thought to export heme, this seems not to be the case, but its exact role is uncertain. Responsible for energy coupling to the transport system. The polypeptide is Cytochrome c biogenesis ATP-binding export protein CcmA (Brucella melitensis biotype 1 (strain ATCC 23456 / CCUG 17765 / NCTC 10094 / 16M)).